Consider the following 427-residue polypeptide: 3-phosphoshikimate 1-carboxyvinyltransferase (427 aa).

3-phosphoshikimate is bound by residues lysine 20, serine 21, and arginine 25. Position 20 (lysine 20) interacts with phosphoenolpyruvate. The phosphoenolpyruvate site is built by glycine 92 and arginine 120. Serine 166, glutamine 168, aspartate 312, and lysine 339 together coordinate 3-phosphoshikimate. Residue glutamine 168 coordinates phosphoenolpyruvate. The Proton acceptor role is filled by aspartate 312. Residues arginine 343 and arginine 385 each coordinate phosphoenolpyruvate.

The protein belongs to the EPSP synthase family. In terms of assembly, monomer.

Its subcellular location is the cytoplasm. The catalysed reaction is 3-phosphoshikimate + phosphoenolpyruvate = 5-O-(1-carboxyvinyl)-3-phosphoshikimate + phosphate. It participates in metabolic intermediate biosynthesis; chorismate biosynthesis; chorismate from D-erythrose 4-phosphate and phosphoenolpyruvate: step 6/7. Catalyzes the transfer of the enolpyruvyl moiety of phosphoenolpyruvate (PEP) to the 5-hydroxyl of shikimate-3-phosphate (S3P) to produce enolpyruvyl shikimate-3-phosphate and inorganic phosphate. In Streptococcus pneumoniae (strain Hungary19A-6), this protein is 3-phosphoshikimate 1-carboxyvinyltransferase.